A 227-amino-acid chain; its full sequence is Phosphoribosylformylglycinamidine synthase subunit PurQ (227 aa).

Residues 3-225 form the Glutamine amidotransferase type-1 domain; the sequence is FAVIVLPGSN…VKNWRETHVA (223 aa). Cys-86 acts as the Nucleophile in catalysis. Active-site residues include His-194 and Glu-196.

Part of the FGAM synthase complex composed of 1 PurL, 1 PurQ and 2 PurS subunits.

Its subcellular location is the cytoplasm. It catalyses the reaction N(2)-formyl-N(1)-(5-phospho-beta-D-ribosyl)glycinamide + L-glutamine + ATP + H2O = 2-formamido-N(1)-(5-O-phospho-beta-D-ribosyl)acetamidine + L-glutamate + ADP + phosphate + H(+). It carries out the reaction L-glutamine + H2O = L-glutamate + NH4(+). It functions in the pathway purine metabolism; IMP biosynthesis via de novo pathway; 5-amino-1-(5-phospho-D-ribosyl)imidazole from N(2)-formyl-N(1)-(5-phospho-D-ribosyl)glycinamide: step 1/2. In terms of biological role, part of the phosphoribosylformylglycinamidine synthase complex involved in the purines biosynthetic pathway. Catalyzes the ATP-dependent conversion of formylglycinamide ribonucleotide (FGAR) and glutamine to yield formylglycinamidine ribonucleotide (FGAM) and glutamate. The FGAM synthase complex is composed of three subunits. PurQ produces an ammonia molecule by converting glutamine to glutamate. PurL transfers the ammonia molecule to FGAR to form FGAM in an ATP-dependent manner. PurS interacts with PurQ and PurL and is thought to assist in the transfer of the ammonia molecule from PurQ to PurL. The protein is Phosphoribosylformylglycinamidine synthase subunit PurQ of Bacillus licheniformis (strain ATCC 14580 / DSM 13 / JCM 2505 / CCUG 7422 / NBRC 12200 / NCIMB 9375 / NCTC 10341 / NRRL NRS-1264 / Gibson 46).